We begin with the raw amino-acid sequence, 258 residues long: uncharacterized protein (258 aa).

A run of 3 helical transmembrane segments spans residues 38–58 (VFGL…LFIA), 72–92 (ALIF…IIFI), and 111–131 (FLVI…MLWW).

It is found in the cell membrane. This is an uncharacterized protein from Mycoplasma pneumoniae (strain ATCC 29342 / M129 / Subtype 1) (Mycoplasmoides pneumoniae).